The sequence spans 109 residues: Nucleoid-associated protein SG0690 (109 aa).

Residues 1–23 (MFGKGGMGNLMKQAQQMQEKMQR) are disordered.

The protein belongs to the YbaB/EbfC family. In terms of assembly, homodimer.

It localises to the cytoplasm. The protein resides in the nucleoid. Binds to DNA and alters its conformation. May be involved in regulation of gene expression, nucleoid organization and DNA protection. This is Nucleoid-associated protein SG0690 from Sodalis glossinidius (strain morsitans).